The chain runs to 110 residues: UPF0122 protein SE_0911 (110 aa).

It belongs to the UPF0122 family.

Its function is as follows. Might take part in the signal recognition particle (SRP) pathway. This is inferred from the conservation of its genetic proximity to ftsY/ffh. May be a regulatory protein. This is UPF0122 protein SE_0911 from Staphylococcus epidermidis (strain ATCC 12228 / FDA PCI 1200).